The following is a 536-amino-acid chain: Phosphoenolpyruvate carboxykinase (ATP) (536 aa).

Substrate is bound by residues Arg61, Tyr195, and Lys201. Residues Lys201, His220, and Gly236 to Thr244 each bind ATP. Mn(2+) contacts are provided by Lys201 and His220. Mn(2+) is bound at residue Asp257. The ATP site is built by Glu285, Arg322, and Thr447. Arg322 contacts substrate.

It belongs to the phosphoenolpyruvate carboxykinase (ATP) family. Requires Mn(2+) as cofactor.

It is found in the cytoplasm. The catalysed reaction is oxaloacetate + ATP = phosphoenolpyruvate + ADP + CO2. It participates in carbohydrate biosynthesis; gluconeogenesis. Involved in the gluconeogenesis. Catalyzes the conversion of oxaloacetate (OAA) to phosphoenolpyruvate (PEP) through direct phosphoryl transfer between the nucleoside triphosphate and OAA. This chain is Phosphoenolpyruvate carboxykinase (ATP), found in Sinorhizobium fredii (strain NBRC 101917 / NGR234).